The primary structure comprises 347 residues: Aromatic amino acid aminotransferase (347 aa).

Lys214 bears the N6-(pyridoxal phosphate)lysine mark.

It belongs to the class-II pyridoxal-phosphate-dependent aminotransferase family. In terms of assembly, homodimer. Requires pyridoxal 5'-phosphate as cofactor.

It catalyses the reaction an aromatic L-alpha-amino acid + 2-oxoglutarate = an aromatic oxo-acid + L-glutamate. In terms of biological role, aminotransferase that catalyzes the conversion of aromatic amino acids and 2-oxoglutarate into corresponding aromatic oxo acids and L-glutamate. This Mycobacteroides abscessus (strain ATCC 19977 / DSM 44196 / CCUG 20993 / CIP 104536 / JCM 13569 / NCTC 13031 / TMC 1543 / L948) (Mycobacterium abscessus) protein is Aromatic amino acid aminotransferase.